Here is a 506-residue protein sequence, read N- to C-terminus: ATP synthase subunit alpha, chloroplastic (506 aa).

170–177 (GDRQTGKT) is a binding site for ATP.

This sequence belongs to the ATPase alpha/beta chains family. In terms of assembly, F-type ATPases have 2 components, CF(1) - the catalytic core - and CF(0) - the membrane proton channel. CF(1) has five subunits: alpha(3), beta(3), gamma(1), delta(1), epsilon(1). CF(0) has four main subunits: a, b, b' and c.

The protein localises to the plastid. The protein resides in the chloroplast thylakoid membrane. The catalysed reaction is ATP + H2O + 4 H(+)(in) = ADP + phosphate + 5 H(+)(out). Produces ATP from ADP in the presence of a proton gradient across the membrane. The alpha chain is a regulatory subunit. The protein is ATP synthase subunit alpha, chloroplastic of Euglena gracilis.